A 319-amino-acid chain; its full sequence is Serpentine receptor class X-43 (319 aa).

A run of 7 helical transmembrane segments spans residues Val-28 to Phe-48, Ala-67 to Ile-87, Tyr-95 to Met-115, Ile-138 to Val-158, Phe-164 to Leu-184, Thr-194 to Phe-214, and Phe-267 to Phe-287.

It belongs to the G-protein coupled receptor 1 family. Expressed in ASI sensory neurons.

The protein resides in the cell membrane. It localises to the perikaryon. Its subcellular location is the cell projection. It is found in the cilium. In terms of biological role, receptor for the ascaroside pheromone icas#9 which suppresses exploratory forgaging behavior. In response to ascaroside icas#9, may furthermore play a role in the expression of genes in the TGF-beta signaling pathway, such as daf-7, and in insulin signaling pathway, such as daf-28, which may in turn contribute to exploratory behavior. The sequence is that of Serpentine receptor class X-43 from Caenorhabditis elegans.